The following is a 123-amino-acid chain: Large ribosomal subunit protein bL12 (123 aa).

This sequence belongs to the bacterial ribosomal protein bL12 family. In terms of assembly, homodimer. Part of the ribosomal stalk of the 50S ribosomal subunit. Forms a multimeric L10(L12)X complex, where L10 forms an elongated spine to which 2 to 4 L12 dimers bind in a sequential fashion. Binds GTP-bound translation factors.

Functionally, forms part of the ribosomal stalk which helps the ribosome interact with GTP-bound translation factors. Is thus essential for accurate translation. The chain is Large ribosomal subunit protein bL12 from Hydrogenovibrio crunogenus (strain DSM 25203 / XCL-2) (Thiomicrospira crunogena).